We begin with the raw amino-acid sequence, 297 residues long: Aspartate carbamoyltransferase catalytic subunit (297 aa).

Residues arginine 49 and threonine 50 each coordinate carbamoyl phosphate. Residue lysine 77 coordinates L-aspartate. Positions 99, 129, and 132 each coordinate carbamoyl phosphate. Residues arginine 162 and arginine 215 each coordinate L-aspartate. 2 residues coordinate carbamoyl phosphate: glycine 256 and proline 257.

It belongs to the aspartate/ornithine carbamoyltransferase superfamily. ATCase family. In terms of assembly, heterododecamer (2C3:3R2) of six catalytic PyrB chains organized as two trimers (C3), and six regulatory PyrI chains organized as three dimers (R2).

It carries out the reaction carbamoyl phosphate + L-aspartate = N-carbamoyl-L-aspartate + phosphate + H(+). It participates in pyrimidine metabolism; UMP biosynthesis via de novo pathway; (S)-dihydroorotate from bicarbonate: step 2/3. Functionally, catalyzes the condensation of carbamoyl phosphate and aspartate to form carbamoyl aspartate and inorganic phosphate, the committed step in the de novo pyrimidine nucleotide biosynthesis pathway. The chain is Aspartate carbamoyltransferase catalytic subunit from Legionella pneumophila subsp. pneumophila (strain Philadelphia 1 / ATCC 33152 / DSM 7513).